The chain runs to 430 residues: Enolase (430 aa).

Gln-165 is a (2R)-2-phosphoglycerate binding site. The active-site Proton donor is Glu-207. Mg(2+) is bound by residues Asp-244, Glu-287, and Asp-314. (2R)-2-phosphoglycerate contacts are provided by Lys-339, Arg-368, Ser-369, and Lys-390. Catalysis depends on Lys-339, which acts as the Proton acceptor.

The protein belongs to the enolase family. As to quaternary structure, component of the RNA degradosome, a multiprotein complex involved in RNA processing and mRNA degradation. Mg(2+) is required as a cofactor.

Its subcellular location is the cytoplasm. It is found in the secreted. It localises to the cell surface. It carries out the reaction (2R)-2-phosphoglycerate = phosphoenolpyruvate + H2O. It participates in carbohydrate degradation; glycolysis; pyruvate from D-glyceraldehyde 3-phosphate: step 4/5. Its function is as follows. Catalyzes the reversible conversion of 2-phosphoglycerate (2-PG) into phosphoenolpyruvate (PEP). It is essential for the degradation of carbohydrates via glycolysis. The sequence is that of Enolase from Xanthomonas oryzae pv. oryzae (strain MAFF 311018).